Reading from the N-terminus, the 83-residue chain is RNA-binding protein Hfq (83 aa).

In terms of domain architecture, Sm spans 10–70 (DAFLNQLRKE…ISTVSPSRPV (61 aa)).

This sequence belongs to the Hfq family. As to quaternary structure, homohexamer.

Functionally, RNA chaperone that binds small regulatory RNA (sRNAs) and mRNAs to facilitate mRNA translational regulation in response to envelope stress, environmental stress and changes in metabolite concentrations. Also binds with high specificity to tRNAs. This is RNA-binding protein Hfq from Desulforudis audaxviator (strain MP104C).